The sequence spans 4814 residues: MHSAAAGLGLSVLNPSPTILPGPTLLHQLVRPACDHIALEHLCKGEITKFSYKSLHDASDALASQIAQSCVSVHGQLIVPVLLQQCPDLYITLLAILKAGGAFCPLNLDAPAERVQFILKDVGAKVVITSPELSARIPRDAGVELLYASDSYEAIVQHHQAVTRQITPHNYAYVMYTSGSTGTPKGVSISHSAATQALLAHDAHIPRFSRFFQFAAPTFDVSVFEIFFPLFRGETLISASRQETLDDLPAVLRQASVDACELTPTVAASLLRKRENAPQLKLLLTIGEMLNPLVVKEFGGTTDRGSILWAMYGPTEATIHCTLQGDFQSNYSTGNIGIPPETVSCFIIKPAADDYDPTSFDLLPAGDVGELAVGGHQLASGYLNDELKTNKAFIESPYGRVYRTGDKAKMNQDGTLECLGRISDGQVKLRGQRIELGEIEHAAMKTSGCHGAAARVIGGILVLFCAVDACVSEVDILQSCSQWLPQFMIPGDVVLSEELPRLPSGKVNAKELQRQFEQSKAQEGQSADLKKSTEPELLQVLQDCFGSQLSLQTELARAGLDSLTAIGLSSDLRDAGYDVRAVSLLKMKTIGHLVSSIKIIDEADGDNEGTRTSVSCLEKLAELKSKELKLEMSYRNVQDIIPCTNLQIAMLSESIRNPGAYWNAVDLELSTTAAAEDICRAIHAIVEQNEILRTGFVQHDSTIYSVIFDAINSDCVRIADEMELVPPKKSNPDLLRPLQIRIKKGAKGNSYNMQVHLHHAIYDGWSLDLFKSDLARAIGSEGLPSRNQFRDMVAFSLSQKREQYDEKARVFWADYLFGWNKPPFPRLIPRAVPCGTIQSKTYRHSLPSSANQAYNGSAQVPFQAALSLVWGGILGLQDVVIGSVTSGRTIPVKGVENIMGPCISSLPLRVNMERMNTIDDLVNSISSSNRHMMEHSTLSQLAVKKSINMYGAEQLYDVLFVYQESLEQRKQTGSIVQEIAHLDRLETKLVLEVQPIQDAVVLQATFHDDYFSSESVEKILSQVAEISSAILENPHSLLESMRSMETDVSTYNMKLEKMDRDSQPDNLAGVVERAATRFGDRTAVSFATQSSATTMEATNITYTDLNRNANCIAHFLLSQKVQSGEVIPIIMNKSIRLYTTILGIIKAGCGYLPLLPSTPNARILEIFNQSGSRLCLADEDSISNIPPSTTVRTILIDEESMEDYPVENPSIDINSSNTAYVIYTSGTTGTPKGVTVSHKNIASNVTYLGVEYPDSAKASSNFLQACSQAFDVSVFEIFFAWHKGMCLCAASNDVLFADIEEAIRQFEITHLSLTPTIASLIDPSNVPSVEFLVTAGEPMTNAVSERWNKYLWQGYGPSETTNICSVKKMSSDDYIEHLGLVFNNTSVAVLQPKGLSTLPIGWAGEFCFGGDQVATGYLNMPRLTAEKFIQHPKYSRLYRSGDFGRMLPDGSLVILGRIDDQVKLRGQRIEAAEINGIVSRVSSATAAVTLVLKQIDSMGEWLVTFYVQDKDAEDFRILEPNASAHHQIFAELHAKLLSYMVPSYLIPVSRIPLTSSGKVDKRAINTTFTQLSKDYLKTVAHNSVKEDDEDWNDTEQAIASLIAASLKISRNDIGRWTPLAILGLDSLSAIQVSRSLTNEFRTTVSISCILQHPTIAQLARKLHSSHESGDVAIVNDFFSQEFQQSVTAVLAEENKEVVEILPCSPLQEAMVSRGKTSYYNKSLLRLHIDPYKMRGYWQHMCERHSILRTCFMATNSSSYPIAQVSLAKWELPWHEFTVTQPSLEDAIRDHLALVPEPLETNTPPLSLALIRYGEIRFLSFICHHALYDGVAMECLWREVESLARGEQLRPSVAQGPFISEIMKLPSTSQTFWKQQFSNFQPSVLFRKPNGKAVQQATHSLTVERSLHKTQHQIKSLGISLLALCQATMARLLAVVSQKSDVCFGNVMNGRTIGLEGIERLVAPCFNTVPIRQDMPDTLSNIDLAKSLLALNTSMLEHQFTPLRQVQKIAATERRSLFDSLLLVQQPLQEMDVNVWTLEEDAGVMDLPLVCEITPCPNLNTLVLDVHYDMSAVPHVAAAGIASLFEHILLQILESPHAVLARRSIPEPLLEQVHLRQPFFFDDSEDQYETEDSDSSWTDEELAVRAVLSELSQTPTQRIDRTTSLFKLGLDSINAVQVAAILRQKDYSISASDIVECQNCSKIARRIFENGYQPKKEIELHDFAAFDVQVRPELDIAGNGYRLLPCTPMQSAMLSAYVSSNGVHYLNEISLEMDKEITAPLVAEKWAQLVAVHAMLRTGFASVRHADSAYAMIQYESVQSERFIHVDNGGFKPRDWKASEANSIQKSWNLPPWRLGVTTKNGAVNVYLIIHHALYDATSLQELLSNFGRLLNSNKTLPVEDVDTGLSAVLHRTAGEQEEASAFWRQLGEQATINRFPLLTPLREANREILIEEMTSTLTSPDLHQMTKSLEISVQTAILASWSRLLAAYTGEEAVIFGVTFSGRSCEATLGTPVPCLTTVPVVAQNLGSNRDLLSQMMRTASDIYQHQYLPLNRIQKEMGYPATALFDTLVAYQKIESEANDRPWVQKQDDAAAEFPVSLEVEPRDDDSICLRITYFSDILPSDQAKLLLRQFDATMEDLLVNPDGHQHDLHNYHPDIFAISPPLEPTMNAPVELLHQFVEVQAKLNPDKIALEHVSGFRGKEPIRDQWTFAQLNSIGNKVANMLSSRTEAGSIIAIHFDKCPEAYFAILGILKSGSAFVALDFSAPSARKQFILQDSRAPCLLTSEDNVIEFEVPCPVIVIDNALLSDYAETPCEVNNTLTPSSTCYCLYTSGTTGTPKGCEITHENTVQCMMAFQDLFHGHWADDSRWLQFAALHFDVSVLEQYWSWSAGITVVSAKKDLILDDLIGFINNANITHIDLTPSLARLTHPETVPGLCRGVFITGGEQLKQEILDAWGSKAVIYNAYGPTEATIGVTTYQRVPQNGRPSNIGRQFRNVGSYVFHKDTEIPVLRGGVGELCISGKLVGKGYLNRPQLTDEKFPTLESFGERIYRTGDLVRILHDGCFEFLGRADDQVKLRGQRLELGEIDHVIRSVKNIHDVTTLVTKHTSSGKDVLVSFIVEEKIPDTPLVVLADNSSISTDARNMCRDKLPSYMVPSYFLKLPYIPLSPNNKAEAKLLKKLFSELSQEDLIKFGSAAVKRDLSKDSAGYQKLISSLAQFCNLDTATIEDSASVFDFGVDSITALSLSAFLVEKGMFAASPALILRNPIVADLAVALSTASSHDTSAEVKRTRQRVQAFEHKYKARVCRDLGAPPSDIEYIYPCSPLQQGMLAKTAVEDGEGAYFNVFKFHLKPGAVVSSVRAALNKLFEQEPILRTTFLHTPDGYVQVARRGISLPWNECSLAEDGRIEEVVESLWHAWVKENSDRVHTPIKATFVTDTDVNMIVLHIFHGLYDGTSFDLMMTRLTNLCNNVEAKAGPSFADALIHGPLRNHDESKQAWIEHLKGWSLSLLALPKEEKSVRPISHTRVLSASKLEALRSIKNVTMQSLLLAAWVSTLQKHSHGNATTGVIISGRSIAMPGVEETIGPLFNTLPFFANFSSAPTWHSLLQRCQDFNATVLEDPHVPLQQLQKWISNGKPLFESLFAYQIEDRRNQRDDLPWIVEDGGLNPDYSLALEVTKRGDDTMQLLLVAKNDLASETVLKNILDVFEDMLASVETDAAIPVQVETALVDALKSEQVKTIKENVEEVWGPAADVLRREVAALANISEAEIAPSTTWLELGLDSIDAVQFSARLKRHHMIISPSAIMKGWSMAYLSSLVMRLTNGDASCELDNLREIKSKLRRYVEATGFDMTEADDILPTTPLQDAMVSGMIESDFTWYFNHEVLKVAPGVDVDKLQAAWSRLFDMTPILRTGFVELVDPQASAVYAQVVYNSSPVISDVTVTSLEELQAIQEQSRAHASQGGAKRNLARVVRAQLGETTFFVLSISHALYDGWSLGLLHQDLKSLYYGESVGRPSPDQFLFKSNASLTPEAQGFWTNYLEKARPTIIPQVEPDSSSVVKAEGFSSTTLSDISRFCREQKISLQSLCQACWAIILARTTRSLDVVFGSILSGRDFDGAEDLLFPTMNTVAVRCILHGSISSFLHYMEDNLGELRSYQMVPLRKATTAAKAAGKDLFNSLFLLQKTPAESSSGSLFQSVEGSSGVDYPVCVEAAASGEVLEWTVACQGQSRDGRYAKELLAELHTTLDYVLRHAEEDVVSFSRAGTRICGSQPIALAEDDDEIPQIDKYTSYEWNATSLAIRKVLSQVSNIPADAIDASSTLYHLGLDSITAIKVSTLLKQRGIFLRPTQLVRSSSIAHMAEQVAALGSFEPPQTNLSWQAWTPPKNADADGILSEAGILKGQVEHVLPALPMQVYMMSIWQNTNGNIFYPEFTYKLSGPHTATDVRNAWARVVEQLPMLRTCLFATGQQDLPFIQVILKPGMSHAGVQPFVRIEIDQTPGSPETLLRLRIHHALYDGVSLPAITDTLLHHLKGDASRDAAPIHQWAHTVTARHDEAHMASRKAFWTQYLDGCSDASRPDNDMTGSRTSLFQEGAFSCASALTDLAARNGISLQSLVLAAYALSLPHTGQDVVLGVYLAGRADDRVPDTLPTLNLVPLRIKARHRDDHVLEMARRVHEDMQKITADDAAGNAQVGLWEVARWTGVKIDRFVNFLTLPAAAAAGKDESNVSLHLAPTSNPVKEDEAAMTTCIHDAAKNAVRDYYPDSVDVEFAVRNGHLDMGVFGPQTRITDEGAHELVRSVVQRLKKTVEACVH.

Residues 21-453 form an adenylation 1 region; the sequence is PGPTLLHQLV…MKTSGCHGAA (433 aa). Residues 528–601 form the Carrier 1 domain; the sequence is DLKKSTEPEL…HLVSSIKIID (74 aa). At Ser562 the chain carries O-(pantetheine 4'-phosphoryl)serine. Residues 637–1045 form a condensation 1 region; that stretch reads VQDIIPCTNL…SLLESMRSME (409 aa). Positions 1101–1488 are adenylation 2; it reads TYTDLNRNAN…SRVSSATAAV (388 aa). Carrier domains lie at 1589–1666 and 2134–2210; these read EDWN…HSSH and SSWT…FENG. Residues Ser1626 and Ser2171 each carry the O-(pantetheine 4'-phosphoryl)serine modification. Condensation stretches follow at residues 1706–2210 and 2243–2649; these read LQEA…FENG and LPCT…HQHD. The interval 2709–3100 is adenylation 3; the sequence is TFAQLNSIGN…IRSVKNIHDV (392 aa). Residues 3203-3280 enclose the Carrier 4 domain; that stretch reads SKDSAGYQKL…DLAVALSTAS (78 aa). Ser3240 carries the O-(pantetheine 4'-phosphoryl)serine modification. The interval 3319 to 3732 is condensation 4; the sequence is YIYPCSPLQQ…VQVETALVDA (414 aa). The Carrier 5 domain occupies 3747–3823; it reads EVWGPAADVL…YLSSLVMRLT (77 aa). Residue Ser3784 is modified to O-(pantetheine 4'-phosphoryl)serine. The condensation 5 stretch occupies residues 3857–4258; that stretch reads DILPTTPLQD…YVLRHAEEDV (402 aa). Residues 4295–4368 enclose the Carrier 6 domain; the sequence is NATSLAIRKV…HMAEQVAALG (74 aa). An O-(pantetheine 4'-phosphoryl)serine modification is found at Ser4329. The condensation 6 stretch occupies residues 4504-4686; sequence ETLLRLRIHH…HEDMQKITAD (183 aa).

It belongs to the NRP synthetase family. The cofactor is pantetheine 4'-phosphate.

The protein operates within siderophore biosynthesis. In terms of biological role, nonribosomal peptide synthetase; part of the gene cluster that mediates the biosynthesis of at least 11 siderophores, including beauverichelin A, dimerumic acid (DA), Na-dimethyl coprogen (NADC), eleutherazine B, ferricrocin (FC), fusarinine A, fusarinine C (FsC), metachelin A, mevalonolactone, rhodotorulic acid (RA) and tenellin. This cocktail of siderophores for iron metabolism is essential for virulence, and more specifically for the fungal virulence in penetrating through the host cuticle. Siderophore synthesis is also involved in conidial germination under iron-deficient conditions. SIDC catalyzes the assembly of ferricrocin whereas SIDD catalyzes the assembly of fusarinine C. This chain is Nonribosomal peptide synthetase SIDC, found in Beauveria bassiana (strain ARSEF 2860) (White muscardine disease fungus).